The following is a 185-amino-acid chain: Ribosome-recycling factor (185 aa).

It belongs to the RRF family.

The protein localises to the cytoplasm. In terms of biological role, responsible for the release of ribosomes from messenger RNA at the termination of protein biosynthesis. May increase the efficiency of translation by recycling ribosomes from one round of translation to another. The sequence is that of Ribosome-recycling factor from Shewanella piezotolerans (strain WP3 / JCM 13877).